The chain runs to 521 residues: Putative FNIP repeat-containing protein L162 (521 aa).

2 FNIP repeats span residues 179-221 (FNKS…LGYK) and 222-263 (YNYP…MGGR).

This is Putative FNIP repeat-containing protein L162 from Acanthamoeba polyphaga mimivirus (APMV).